Here is a 140-residue protein sequence, read N- to C-terminus: NADPH-dependent 7-cyano-7-deazaguanine reductase (140 aa).

Cys49 serves as the catalytic Thioimide intermediate. The active-site Proton donor is the Asp56. Residues 71-73 and 90-91 contribute to the substrate site; these read IEL and HE.

This sequence belongs to the GTP cyclohydrolase I family. QueF type 1 subfamily.

The protein localises to the cytoplasm. The catalysed reaction is 7-aminomethyl-7-carbaguanine + 2 NADP(+) = 7-cyano-7-deazaguanine + 2 NADPH + 3 H(+). It participates in tRNA modification; tRNA-queuosine biosynthesis. Its function is as follows. Catalyzes the NADPH-dependent reduction of 7-cyano-7-deazaguanine (preQ0) to 7-aminomethyl-7-deazaguanine (preQ1). The protein is NADPH-dependent 7-cyano-7-deazaguanine reductase of Prochlorococcus marinus (strain NATL2A).